A 352-amino-acid chain; its full sequence is UPF0324 membrane protein blr3189 (352 aa).

Transmembrane regions (helical) follow at residues 21-43 (IAALIPGILLCIAVAGVSALLER), 53-71 (YVEALVMAILLGMALRSFW), 88-110 (LLEVAVMLLGASISFAAIAASGI), 114-136 (ASIAAVVVIALCVSFGLSRLLGL), 143-165 (LIACGNSICGNSAIAAVAPIIGA), 175-197 (SFTAILGVMMVLGLPLLIPLLQL), 204-226 (ILAGLTVYAVPQVLAATVPAGLV), 236-253 (LMRVLMLGPVVVGLSLVA), 265-284 (VGFFRLVPWFILGFLALATL), 294-316 (VVGPVTKITSFLTVVSMAALGLG), and 329-351 (VTAAVTLSLMLLLGISIALVHWF).

It belongs to the UPF0324 family.

It is found in the cell membrane. In Bradyrhizobium diazoefficiens (strain JCM 10833 / BCRC 13528 / IAM 13628 / NBRC 14792 / USDA 110), this protein is UPF0324 membrane protein blr3189.